A 166-amino-acid polypeptide reads, in one-letter code: Lutropin subunit beta (166 aa).

Residues 1–21 form the signal peptide; it reads MGGAQVLLLLTLLGTPLVTHG. Disulfide bonds link Cys-56–Cys-104, Cys-70–Cys-119, Cys-73–Cys-157, Cys-81–Cys-135, Cys-85–Cys-137, and Cys-140–Cys-147. N-linked (GlcNAc...) asparagine glycosylation is present at Asn-60.

It belongs to the glycoprotein hormones subunit beta family. As to quaternary structure, heterodimer of a common alpha chain and a unique beta chain which confers biological specificity to thyrotropin, lutropin, follitropin and gonadotropin.

It is found in the secreted. Its function is as follows. Promotes spermatogenesis and ovulation by stimulating the testes and ovaries to synthesize steroids. This chain is Lutropin subunit beta (LHB), found in Coturnix japonica (Japanese quail).